Consider the following 86-residue polypeptide: Co-chaperonin GroES (86 aa).

This sequence belongs to the GroES chaperonin family. As to quaternary structure, heptamer of 7 subunits arranged in a ring. Interacts with the chaperonin GroEL.

It localises to the cytoplasm. In terms of biological role, together with the chaperonin GroEL, plays an essential role in assisting protein folding. The GroEL-GroES system forms a nano-cage that allows encapsulation of the non-native substrate proteins and provides a physical environment optimized to promote and accelerate protein folding. GroES binds to the apical surface of the GroEL ring, thereby capping the opening of the GroEL channel. This is Co-chaperonin GroES from Campylobacter concisus (strain 13826).